Consider the following 1645-residue polypeptide: MADGEHTLPADEELFEQPPLQQQQPEIAEPIVMAQEPIQGVSEDPQASEATHEAPDNYPVDHQMENQEFYQEPQIPEPQQIPQIPVFQPAAYNPPNYVAPQQRANNFGEPAAAADSRPLTEEEQLAAERPTEDTVWIDSDDDTDVEEAILRANFWLPYSDHNYDPPDPADRIILPTEGPFPCIAGLDEDCNIVKQWMPEDAVGPGSPGTQYRRNQQTGGGLPSTSVAPQQQQLPVRHNIQNRPMVAAQPFSIGGNQVEYGGIGGMDSRMQQRGVVRDGPQYRVMNDFGNGLPMRGQLPPRNSPAANAINRVREQQQQMYHQAGARGSLQQRVPAPAAPTPGSYQHIVNAVPVGGANPMRRVPPQARPGMIGGAANNNRARPIHVTRPMDTQEFEHPVAPAAAAPPRRVVDVAPHRMTPEQRQELQQMNRQRAAPQFPAAAAQRSAEKIVIQQRPGASSSRAPRPSMAQEDLLRSPTRRLSERVPQEHQTPVLEPRRFQVKVTDTYSTPIPKASDQLPAQLTEEDPPEESAAAAAPEDVPDAAPEDPPKGILKPTPPHRMTQEEKNAHFARLTTDKEKPTSSASILPQDAAPPHVPPPPPPPLVLRPHHQDETLAMVQSVFESKPRQPDTPKDKEAISKIADLLRFSADEFTGQSGSSAAARQRTVSGSAARAQTYQMHHQQQQQHHHQMPMDQRKRHSSGRYDALMGAMPLQQQPPPPPPSQFQHTDSIAHRPRGRPKGTRHPSVAVQPQRSGGARTLPPRAQTVAMSARNGANAKNSDSESEGIDEAAEESWTMRCHCGMDHGDGDTIECEGCKTWQHMACMGLTLKSNTSKYKCEMCLPRRLPVSKAEAAREQERILNRLRAAAKKQKRKSEPVEQKQKSQPSTSRKSAPMALQQQPAEPRVAQLNDYSKQASALLFGMEQTAGADTLLAESRLHKKARRMFVEEAVEALVTTDLVQIRQVILEVNGHVSMSNEVKRQPGGGNCIFMYDGLMKGTAGEDMGDGQELVCIDTKRKGNDTKFTRRSCVPNCVLKHVLGSNATLGIMIVATKDITRNTEVTLPFDADWRESEVELECAEHMKELQACPFESERRRFAAERHRAMDHKKREAEEARRADEERRRLEEEVRRERAAKTKQMDEAEKARLEAEKAAEKEKKAKEREEAKERKKMEVEASAAAAPESSNSITAREERRIQQAEEMFRRQEEEGKRKEARRRSKSVTPGVLEAAGTAAREDAPEASIPAPAPSPPASRRSVSRTTQPSTSSFATPTEPPAKNKRMRSVVPPKSEPASSAKRVRATTVATPKDTTASNDSRKRKSSATGKTPVAKRSKNVVPTSFGLALIEKELREQARDSTVLEMILPDYIMKEKRSGLLAGQSPDFSEVRAQIEEENRMKERFTKREAKKKAVEKAKEKEKKEHRKEPKKANEPGPAPKSEKAVEKAVEKVEKKPKSPQKPPAKPTAQKPPLKKTEEVDGIEREASESSSKESSVAPEEKKNPKKITFAEYNSRRSQKREAGECSTPPAVTRRGFIPSTEGEDLVNVELSAIPLDDHPSSSNTAPTTTIAPSVGGAPKPTSVVVKSPSTRSRTRGAASESVDDAPAEHSMSLQDRVFSMFGSTVDAPAPPPPPPASAETNSRRSRSTRWN.

Disordered stretches follow at residues 1–82 (MADG…QQIP), 109–132 (EPAA…RPTE), 200–228 (DAVG…SVAP), 417–606 (TPEQ…VLRP), and 651–789 (TGQS…DEAA). Composition is skewed to low complexity over residues 16–31 (EQPP…AEPI) and 67–82 (QEFY…QQIP). Residues 207–228 (PGTQYRRNQQTGGGLPSTSVAP) are compositionally biased toward polar residues. Composition is skewed to low complexity over residues 429-443 (RQRA…AAQR) and 453-467 (RPGA…PSMA). Residues 559–578 (MTQEEKNAHFARLTTDKEKP) are compositionally biased toward basic and acidic residues. The span at 592–603 (PHVPPPPPPPLV) shows a compositional bias: pro residues. A compositionally biased stretch (polar residues) spans 651–675 (TGQSGSSAAARQRTVSGSAARAQTY). Basic residues-rich tracts occupy residues 684 to 699 (QHHH…RHSS) and 731 to 741 (HRPRGRPKGTR). A compositionally biased stretch (acidic residues) spans 780-789 (SESEGIDEAA). The PHD-type zinc-finger motif lies at 794–842 (TMRCHCGMDHGDGDTIECEGCKTWQHMACMGLTLKSNTSKYKCEMCLPR). The interval 865 to 904 (AAKKQKRKSEPVEQKQKSQPSTSRKSAPMALQQQPAEPRV) is disordered. A compositionally biased stretch (polar residues) spans 881 to 899 (KSQPSTSRKSAPMALQQQP). An SET domain is found at 973-1064 (MSNEVKRQPG…RNTEVTLPFD (92 aa)). Over residues 1099 to 1172 (RHRAMDHKKR…EAKERKKMEV (74 aa)) the composition is skewed to basic and acidic residues. 3 disordered regions span residues 1099–1333 (RHRA…SKNV), 1371–1536 (SGLL…STEG), and 1548–1645 (PLDD…TRWN). A coiled-coil region spans residues 1103-1217 (MDHKKREAEE…GKRKEARRRS (115 aa)). The span at 1173–1183 (EASAAAAPESS) shows a compositional bias: low complexity. Positions 1188–1210 (AREERRIQQAEEMFRRQEEEGKR) are enriched in basic and acidic residues. 2 stretches are compositionally biased toward polar residues: residues 1258-1268 (TTQPSTSSFAT) and 1300-1311 (TVATPKDTTASN). Basic and acidic residues-rich tracts occupy residues 1382 to 1427 (SEVR…KKAN), 1434 to 1450 (KSEK…EKKP), and 1468 to 1485 (KKTE…ESSS). A compositionally biased stretch (polar residues) spans 1554–1565 (SSSNTAPTTTIA).

Belongs to the class V-like SAM-binding methyltransferase superfamily. Expressed both in the germline and in somatic tissues.

It is found in the nucleus. It catalyses the reaction L-lysyl(9)-[histone H3] + 3 S-adenosyl-L-methionine = N(6),N(6),N(6)-trimethyl-L-lysyl(9)-[histone H3] + 3 S-adenosyl-L-homocysteine + 3 H(+). In terms of biological role, histone methyltransferase that mediates trimethylation of 'Lys-9' of histone H3 in vitro. Involved in transcriptional regulation. Plays a role in the negative regulation of lifespan and in heat resistance. Together with set-9, negatively regulates lifespan in a germline-independent, partially daf-16-dependent fashion. Together with set-9, plays a role in germline development and maintenance and might play a role in the restriction of the trimethylation mark on histone H3 'Lys-4'(H3K4me3) to target genes specifically in the germline. Together with spr-5, required for transgenerational fertility. This is Histone-lysine N-methyltransferase set-26 from Caenorhabditis elegans.